A 212-amino-acid polypeptide reads, in one-letter code: Histidine biosynthesis bifunctional protein HisIE (212 aa).

The tract at residues 1–109 (MRPDFHKQEL…ELIPFDDSDI (109 aa)) is phosphoribosyl-AMP cyclohydrolase. The interval 110-212 (FSELEKQIID…KKEFHTRTAD (103 aa)) is phosphoribosyl-ATP pyrophosphohydrolase.

This sequence in the N-terminal section; belongs to the PRA-CH family. The protein in the C-terminal section; belongs to the PRA-PH family.

It is found in the cytoplasm. The enzyme catalyses 1-(5-phospho-beta-D-ribosyl)-ATP + H2O = 1-(5-phospho-beta-D-ribosyl)-5'-AMP + diphosphate + H(+). It carries out the reaction 1-(5-phospho-beta-D-ribosyl)-5'-AMP + H2O = 1-(5-phospho-beta-D-ribosyl)-5-[(5-phospho-beta-D-ribosylamino)methylideneamino]imidazole-4-carboxamide. It functions in the pathway amino-acid biosynthesis; L-histidine biosynthesis; L-histidine from 5-phospho-alpha-D-ribose 1-diphosphate: step 2/9. Its pathway is amino-acid biosynthesis; L-histidine biosynthesis; L-histidine from 5-phospho-alpha-D-ribose 1-diphosphate: step 3/9. In Lactococcus lactis subsp. lactis (strain IL1403) (Streptococcus lactis), this protein is Histidine biosynthesis bifunctional protein HisIE (hisI).